The chain runs to 297 residues: Transcriptional regulator protein Pur-beta (297 aa).

2 disordered regions span residues 1–26 (MADG…EQET) and 275–297 (QERH…VDDD). Residue Ala-2 is modified to N-acetylalanine. The interval 23–246 (EQETQELASK…LRVSEVKPSY (224 aa)) is DNA-binding. The span at 275–288 (QERHRDKMYERREE) shows a compositional bias: basic and acidic residues.

It belongs to the PUR DNA-binding protein family.

The protein resides in the nucleus. Its function is as follows. Transcriptional regulator which can act as an activator or a repressor. The polypeptide is Transcriptional regulator protein Pur-beta (purb) (Danio rerio (Zebrafish)).